Consider the following 561-residue polypeptide: Urocanate hydratase (561 aa).

NAD(+)-binding positions include 52–53, Gln-130, 176–178, Glu-196, Arg-201, 242–243, 263–267, 273–274, and Tyr-322; these read GG, GMG, NA, QTSAH, and YL. Residue Cys-410 is part of the active site. Gly-492 contributes to the NAD(+) binding site.

Belongs to the urocanase family. It depends on NAD(+) as a cofactor.

It localises to the cytoplasm. The enzyme catalyses 4-imidazolone-5-propanoate = trans-urocanate + H2O. It functions in the pathway amino-acid degradation; L-histidine degradation into L-glutamate; N-formimidoyl-L-glutamate from L-histidine: step 2/3. In terms of biological role, catalyzes the conversion of urocanate to 4-imidazolone-5-propionate. The sequence is that of Urocanate hydratase from Salmonella choleraesuis (strain SC-B67).